The sequence spans 363 residues: 3-methyl-D-ornithine--L-lysine ligase (363 aa).

An ATP-binding site is contributed by Lys10. 11 to 12 (LQ) contributes to the L-lysine binding site. ATP-binding positions include Asp31, 49 to 50 (DV), and 72 to 73 (EN). Glu72 provides a ligand contact to L-lysine. The region spanning 85-269 (EEFSCPVLFD…LIELLFRAFG (185 aa)) is the ATP-grasp domain. Residues Lys104, Lys131, Ser138, and 160–163 (EEYV) each bind ADP. D-ornithine-binding positions include 169–171 (SLE) and Asp225. Mg(2+)-binding residues include Glu227, Glu239, and Asp241. ADP is bound at residue Glu239. D-ornithine contacts are provided by residues 243–248 (RFPSQT) and Glu302. The L-lysine site is built by Ser246 and Glu302.

This sequence belongs to the PylC family. Requires Mg(2+) as cofactor.

It catalyses the reaction (3R)-3-methyl-D-ornithine + L-lysine + ATP = (3R)-3-methyl-D-ornithyl-N(6)-L-lysine + ADP + phosphate + H(+). The protein operates within amino-acid biosynthesis; L-pyrrolysine biosynthesis. Is required for the biosynthesis of pyrrolysine. Catalyzes the ATP-dependent ligation between (3R)-3-methyl-D-ornithine and L-lysine, leading to (3R)-3-methyl-D-ornithyl-N6-L-lysine. In Methanosarcina acetivorans (strain ATCC 35395 / DSM 2834 / JCM 12185 / C2A), this protein is 3-methyl-D-ornithine--L-lysine ligase.